The primary structure comprises 263 residues: 3-methyl-2-oxobutanoate hydroxymethyltransferase (263 aa).

Residues D44 and D83 each contribute to the Mg(2+) site. Residues 44–45 (DS), D83, and K113 each bind 3-methyl-2-oxobutanoate. E115 contacts Mg(2+). The Proton acceptor role is filled by E183.

This sequence belongs to the PanB family. Homodecamer; pentamer of dimers. The cofactor is Mg(2+).

It localises to the cytoplasm. The catalysed reaction is 3-methyl-2-oxobutanoate + (6R)-5,10-methylene-5,6,7,8-tetrahydrofolate + H2O = 2-dehydropantoate + (6S)-5,6,7,8-tetrahydrofolate. Its pathway is cofactor biosynthesis; (R)-pantothenate biosynthesis; (R)-pantoate from 3-methyl-2-oxobutanoate: step 1/2. In terms of biological role, catalyzes the reversible reaction in which hydroxymethyl group from 5,10-methylenetetrahydrofolate is transferred onto alpha-ketoisovalerate to form ketopantoate. In Trichodesmium erythraeum (strain IMS101), this protein is 3-methyl-2-oxobutanoate hydroxymethyltransferase.